The chain runs to 439 residues: Xylose isomerase (439 aa).

Active-site residues include histidine 99 and aspartate 102. Positions 230, 266, 269, 294, 305, 307, and 337 each coordinate Mg(2+).

This sequence belongs to the xylose isomerase family. Homotetramer. Mg(2+) is required as a cofactor.

It localises to the cytoplasm. The enzyme catalyses alpha-D-xylose = alpha-D-xylulofuranose. The protein is Xylose isomerase of Oceanobacillus iheyensis (strain DSM 14371 / CIP 107618 / JCM 11309 / KCTC 3954 / HTE831).